The following is a 469-amino-acid chain: ATP synthase subunit beta (469 aa).

ATP is bound at residue 156–163; it reads GGAGVGKT.

The protein belongs to the ATPase alpha/beta chains family. As to quaternary structure, F-type ATPases have 2 components, CF(1) - the catalytic core - and CF(0) - the membrane proton channel. CF(1) has five subunits: alpha(3), beta(3), gamma(1), delta(1), epsilon(1). CF(0) has three main subunits: a(1), b(2) and c(9-12). The alpha and beta chains form an alternating ring which encloses part of the gamma chain. CF(1) is attached to CF(0) by a central stalk formed by the gamma and epsilon chains, while a peripheral stalk is formed by the delta and b chains.

Its subcellular location is the cell membrane. The catalysed reaction is ATP + H2O + 4 H(+)(in) = ADP + phosphate + 5 H(+)(out). Functionally, produces ATP from ADP in the presence of a proton gradient across the membrane. The catalytic sites are hosted primarily by the beta subunits. The sequence is that of ATP synthase subunit beta from Bacillus anthracis (strain CDC 684 / NRRL 3495).